Reading from the N-terminus, the 502-residue chain is Arabinose import ATP-binding protein AraG (502 aa).

ABC transporter domains lie at 6-241 (LEFD…MVGR) and 252-497 (REVG…MVES). 38–45 (GENGAGKS) contributes to the ATP binding site.

The protein belongs to the ABC transporter superfamily. Arabinose importer (TC 3.A.1.2.2) family. In terms of assembly, the complex is composed of two ATP-binding proteins (AraG), two transmembrane proteins (AraH) and a solute-binding protein (AraF).

It localises to the cell inner membrane. It catalyses the reaction L-arabinose(out) + ATP + H2O = L-arabinose(in) + ADP + phosphate + H(+). In terms of biological role, part of the ABC transporter complex AraFGH involved in arabinose import. Responsible for energy coupling to the transport system. In Mannheimia succiniciproducens (strain KCTC 0769BP / MBEL55E), this protein is Arabinose import ATP-binding protein AraG.